Consider the following 181-residue polypeptide: Large ribosomal subunit protein uL5 (181 aa).

The protein belongs to the universal ribosomal protein uL5 family. In terms of assembly, part of the 50S ribosomal subunit; contacts the 5S rRNA and probably tRNA. Forms a bridge to the 30S subunit in the 70S ribosome.

Functionally, this is one of the proteins that bind and probably mediate the attachment of the 5S RNA into the large ribosomal subunit, where it forms part of the central protuberance. In the 70S ribosome it contacts protein S13 of the 30S subunit (bridge B1b), connecting the 2 subunits; this bridge is implicated in subunit movement. May contact the P site tRNA; the 5S rRNA and some of its associated proteins might help stabilize positioning of ribosome-bound tRNAs. The sequence is that of Large ribosomal subunit protein uL5 from Methanococcus aeolicus (strain ATCC BAA-1280 / DSM 17508 / OCM 812 / Nankai-3).